Consider the following 599-residue polypeptide: Calmodulin-binding protein 60 E (599 aa).

Positions 1–21 are disordered; that stretch reads MNKRGYECSQEDTDKLPESKR. Residues 1 to 80 form a calmodulin-binding region; sequence MNKRGYECSQ…LTSRSPEPKR (80 aa). Residues 150 to 273 form a DNA-binding region; sequence EDDEDWTREH…VLHKKLLKAN (124 aa).

This sequence belongs to the plant ACBP60 protein family. As to quaternary structure, interacts with calmodulin (CaM).

The protein resides in the nucleus. In terms of biological role, transcription activator that binds DNA in a sequence-specific manner, likely 5'-GAAATTTTGG-3', to promote the expression of target genes. The polypeptide is Calmodulin-binding protein 60 E (Arabidopsis thaliana (Mouse-ear cress)).